A 254-amino-acid polypeptide reads, in one-letter code: Phosphoribosylaminoimidazole-succinocarboxamide synthase (254 aa).

Belongs to the SAICAR synthetase family.

The catalysed reaction is 5-amino-1-(5-phospho-D-ribosyl)imidazole-4-carboxylate + L-aspartate + ATP = (2S)-2-[5-amino-1-(5-phospho-beta-D-ribosyl)imidazole-4-carboxamido]succinate + ADP + phosphate + 2 H(+). It functions in the pathway purine metabolism; IMP biosynthesis via de novo pathway; 5-amino-1-(5-phospho-D-ribosyl)imidazole-4-carboxamide from 5-amino-1-(5-phospho-D-ribosyl)imidazole-4-carboxylate: step 1/2. This is Phosphoribosylaminoimidazole-succinocarboxamide synthase from Bartonella henselae (strain ATCC 49882 / DSM 28221 / CCUG 30454 / Houston 1) (Rochalimaea henselae).